Consider the following 402-residue polypeptide: F-box protein At4g22390 (402 aa).

Positions 1 to 49 constitute an F-box domain; it reads MAECPTDLINEMFLRLRATTLVKCRVLSKPCFSLIDSPEFVSSHLRRRL.

This Arabidopsis thaliana (Mouse-ear cress) protein is F-box protein At4g22390.